A 58-amino-acid polypeptide reads, in one-letter code: Large ribosomal subunit protein uL30 (58 aa).

The protein belongs to the universal ribosomal protein uL30 family. In terms of assembly, part of the 50S ribosomal subunit.

The polypeptide is Large ribosomal subunit protein uL30 (Zymomonas mobilis subsp. mobilis (strain ATCC 31821 / ZM4 / CP4)).